The sequence spans 261 residues: Pantothenate synthetase (261 aa).

M29 to H36 contributes to the ATP binding site. H36 (proton donor) is an active-site residue. (R)-pantoate is bound at residue Q60. Q60 lines the beta-alanine pocket. Residue G147–D150 participates in ATP binding. Residue Q153 participates in (R)-pantoate binding. L184–R187 is an ATP binding site.

This sequence belongs to the pantothenate synthetase family. Homodimer.

The protein localises to the cytoplasm. It carries out the reaction (R)-pantoate + beta-alanine + ATP = (R)-pantothenate + AMP + diphosphate + H(+). Its pathway is cofactor biosynthesis; (R)-pantothenate biosynthesis; (R)-pantothenate from (R)-pantoate and beta-alanine: step 1/1. Catalyzes the condensation of pantoate with beta-alanine in an ATP-dependent reaction via a pantoyl-adenylate intermediate. The polypeptide is Pantothenate synthetase (Francisella tularensis subsp. mediasiatica (strain FSC147)).